The primary structure comprises 319 residues: FAD-dependent oxidoreductase FVFD30 (319 aa).

FAD is bound by residues arginine 6, aspartate 18, and lysine 25. The NAD(+) site is built by lysine 129 and glycine 188. NADP(+)-binding residues include lysine 129 and glycine 188. The FAD site is built by aspartate 228 and tyrosine 265. Aspartate 228 provides a ligand contact to 6-hydroxy-FAD. Tyrosine 265 lines the NAD(+) pocket. Residue tyrosine 265 coordinates NADP(+). Residues 281–301 (GVGYFGVWWGIVIGGWLASLL) form a helical membrane-spanning segment.

It belongs to the FAD-dependent oxidoreductase family.

The protein resides in the membrane. Functionally, probable FAD-dependent oxidoreductase that plays a role in the regulation of fruiting body development. This Flammulina velutipes (Agaricus velutipes) protein is FAD-dependent oxidoreductase FVFD30.